Reading from the N-terminus, the 307-residue chain is Aspartate carbamoyltransferase catalytic subunit (307 aa).

Carbamoyl phosphate-binding residues include Arg54 and Thr55. Residue Lys83 participates in L-aspartate binding. Residues Arg104, His132, and Gln135 each coordinate carbamoyl phosphate. Residues Arg165 and Arg228 each contribute to the L-aspartate site. Positions 267 and 268 each coordinate carbamoyl phosphate.

The protein belongs to the aspartate/ornithine carbamoyltransferase superfamily. ATCase family. In terms of assembly, heterododecamer (2C3:3R2) of six catalytic PyrB chains organized as two trimers (C3), and six regulatory PyrI chains organized as three dimers (R2).

The catalysed reaction is carbamoyl phosphate + L-aspartate = N-carbamoyl-L-aspartate + phosphate + H(+). It functions in the pathway pyrimidine metabolism; UMP biosynthesis via de novo pathway; (S)-dihydroorotate from bicarbonate: step 2/3. In terms of biological role, catalyzes the condensation of carbamoyl phosphate and aspartate to form carbamoyl aspartate and inorganic phosphate, the committed step in the de novo pyrimidine nucleotide biosynthesis pathway. The sequence is that of Aspartate carbamoyltransferase catalytic subunit from Clostridium botulinum (strain Eklund 17B / Type B).